A 354-amino-acid polypeptide reads, in one-letter code: S-adenosylmethionine:tRNA ribosyltransferase-isomerase (354 aa).

Belongs to the QueA family. Monomer.

Its subcellular location is the cytoplasm. The catalysed reaction is 7-aminomethyl-7-carbaguanosine(34) in tRNA + S-adenosyl-L-methionine = epoxyqueuosine(34) in tRNA + adenine + L-methionine + 2 H(+). The protein operates within tRNA modification; tRNA-queuosine biosynthesis. Transfers and isomerizes the ribose moiety from AdoMet to the 7-aminomethyl group of 7-deazaguanine (preQ1-tRNA) to give epoxyqueuosine (oQ-tRNA). In Salmonella schwarzengrund (strain CVM19633), this protein is S-adenosylmethionine:tRNA ribosyltransferase-isomerase.